A 341-amino-acid polypeptide reads, in one-letter code: Acetylpolyamine amidohydrolase (341 aa).

H157 acts as the Proton donor/acceptor in catalysis. Residues D192, H194, and D281 each coordinate Zn(2+).

This sequence belongs to the histone deacetylase family. In terms of assembly, homodimer. Requires Zn(2+) as cofactor.

The enzyme catalyses N-acetylputrescine + H2O = putrescine + acetate. The catalysed reaction is N-acetylcadaverine + H2O = cadaverine + acetate. It functions in the pathway amine and polyamine metabolism. Involved in polyamine metabolism. Catalyzes the deacetylation of various acetylated polyamines such as N-acetylputrescine and N-acetylcadaverine. The sequence is that of Acetylpolyamine amidohydrolase from Burkholderia pseudomallei (strain 1710b).